Reading from the N-terminus, the 1755-residue chain is Transposon Ty1-GR1 Gag-Pol polyprotein (1755 aa).

The segment covering 1 to 16 (MESQQLSQHSHISHGS) has biased composition (low complexity). 3 disordered regions span residues 1 to 93 (MESQ…MMTQ), 126 to 173 (PQSQ…RPPP), and 352 to 421 (GSRN…SKST). Polar residues-rich tracts occupy residues 48–60 (TKAN…TPAS), 71–93 (SPQT…MMTQ), and 127–152 (QSQF…GNTF). Positions 153-165 (TDSSSADSDMTST) are enriched in low complexity. Residues 299–401 (NNGIHINNKV…NSKSKTARAH (103 aa)) form an RNA-binding region. A compositionally biased stretch (low complexity) spans 402–418 (NVSTSNNSPSTDNDSIS). Serine 416 carries the post-translational modification Phosphoserine. Residue aspartate 461 is the For protease activity; shared with dimeric partner of the active site. Positions 583 to 640 (NVHTSESTRKYPYPFIHRMLAHANAQTIRYSLKNNTITYFNESDVDWSSAIDYQCPDC) are integrase-type zinc finger-like. Residues 660 to 835 (NSYEPFQYLH…AGLDISTLLP (176 aa)) form the Integrase catalytic domain. 2 residues coordinate Mg(2+): aspartate 671 and aspartate 736. Disordered stretches follow at residues 956 to 1087 (SKAV…ETEK), 1092 to 1111 (RSPS…NIVP), and 1130 to 1187 (DLPL…DNET). Positions 960–969 (SPTDSTPPST) are enriched in low complexity. Polar residues predominate over residues 1005–1015 (STPQISNIEST). The segment covering 1038–1053 (ESSHASKSKDFRHSDS) has biased composition (basic and acidic residues). Composition is skewed to polar residues over residues 1054–1082 (YSEN…QISD) and 1101–1111 (PENNSSHNIVP). The Bipartite nuclear localization signal motif lies at 1178–1212 (KKRSLEDNETEIKVSRDTWNTKNMRSLEPPRSKKR). The Reverse transcriptase Ty1/copia-type domain occupies 1338 to 1476 (NNYYITQLDI…DILGLEIKYQ (139 aa)). Aspartate 1346, aspartate 1427, aspartate 1428, aspartate 1610, glutamate 1652, and aspartate 1685 together coordinate Mg(2+). The RNase H Ty1/copia-type domain maps to 1610 to 1752 (DASYGNQPYY…IKTFKLLTNK (143 aa)).

The capsid protein forms a homotrimer, from which the VLPs are assembled. The protease is a homodimer, whose active site consists of two apposed aspartic acid residues. Post-translationally, initially, virus-like particles (VLPs) are composed of the structural unprocessed proteins Gag and Gag-Pol, and also contain the host initiator methionine tRNA (tRNA(i)-Met) which serves as a primer for minus-strand DNA synthesis, and a dimer of genomic Ty RNA. Processing of the polyproteins occurs within the particle and proceeds by an ordered pathway, called maturation. First, the protease (PR) is released by autocatalytic cleavage of the Gag-Pol polyprotein yielding capsid protein p45 and a Pol-p154 precursor protein. This cleavage is a prerequisite for subsequent processing of Pol-p154 at the remaining sites to release the mature structural and catalytic proteins. Maturation takes place prior to the RT reaction and is required to produce transposition-competent VLPs.

The protein localises to the cytoplasm. The protein resides in the nucleus. It carries out the reaction DNA(n) + a 2'-deoxyribonucleoside 5'-triphosphate = DNA(n+1) + diphosphate. It catalyses the reaction Endonucleolytic cleavage to 5'-phosphomonoester.. Its function is as follows. Capsid protein (CA) is the structural component of the virus-like particle (VLP), forming the shell that encapsulates the retrotransposons dimeric RNA genome. The particles are assembled from trimer-clustered units and there are holes in the capsid shells that allow for the diffusion of macromolecules. CA also has nucleocapsid-like chaperone activity, promoting primer tRNA(i)-Met annealing to the multipartite primer-binding site (PBS), dimerization of Ty1 RNA and initiation of reverse transcription. In terms of biological role, the aspartyl protease (PR) mediates the proteolytic cleavages of the Gag and Gag-Pol polyproteins after assembly of the VLP. Reverse transcriptase/ribonuclease H (RT) is a multifunctional enzyme that catalyzes the conversion of the retro-elements RNA genome into dsDNA within the VLP. The enzyme displays a DNA polymerase activity that can copy either DNA or RNA templates, and a ribonuclease H (RNase H) activity that cleaves the RNA strand of RNA-DNA heteroduplexes during plus-strand synthesis and hydrolyzes RNA primers. The conversion leads to a linear dsDNA copy of the retrotransposon that includes long terminal repeats (LTRs) at both ends. Functionally, integrase (IN) targets the VLP to the nucleus, where a subparticle preintegration complex (PIC) containing at least integrase and the newly synthesized dsDNA copy of the retrotransposon must transit the nuclear membrane. Once in the nucleus, integrase performs the integration of the dsDNA into the host genome. This Saccharomyces cerevisiae (strain ATCC 204508 / S288c) (Baker's yeast) protein is Transposon Ty1-GR1 Gag-Pol polyprotein (TY1B-GR1).